The sequence spans 313 residues: tRNA-cytidine(32) 2-sulfurtransferase (313 aa).

The PP-loop motif motif lies at 47 to 52; it reads SGGKDS. 3 residues coordinate [4Fe-4S] cluster: Cys-122, Cys-125, and Cys-213.

It belongs to the TtcA family. Homodimer. The cofactor is Mg(2+). It depends on [4Fe-4S] cluster as a cofactor.

The protein resides in the cytoplasm. The catalysed reaction is cytidine(32) in tRNA + S-sulfanyl-L-cysteinyl-[cysteine desulfurase] + AH2 + ATP = 2-thiocytidine(32) in tRNA + L-cysteinyl-[cysteine desulfurase] + A + AMP + diphosphate + H(+). It functions in the pathway tRNA modification. Catalyzes the ATP-dependent 2-thiolation of cytidine in position 32 of tRNA, to form 2-thiocytidine (s(2)C32). The sulfur atoms are provided by the cysteine/cysteine desulfurase (IscS) system. In Yersinia enterocolitica serotype O:8 / biotype 1B (strain NCTC 13174 / 8081), this protein is tRNA-cytidine(32) 2-sulfurtransferase.